Consider the following 184-residue polypeptide: Probable RNA 2'-phosphotransferase (184 aa).

Belongs to the KptA/TPT1 family.

Its function is as follows. Removes the 2'-phosphate from RNA via an intermediate in which the phosphate is ADP-ribosylated by NAD followed by a presumed transesterification to release the RNA and generate ADP-ribose 1''-2''-cyclic phosphate (APPR&gt;P). May function as an ADP-ribosylase. The protein is Probable RNA 2'-phosphotransferase of Escherichia coli O9:H4 (strain HS).